The primary structure comprises 191 residues: MKKNLLGFTLASLLFTTGSAVAAEYKIDKEGQHAFVNFRIQHLGYSWLYGTFKDFDGTFTFDEKNPSADKVNVTINTNSVDTNHAERDKHLRSAEFLNVAKFPQATFTSTSVKKEGDELDITGNLTLNGVTKPVTLEAKLMGQGDDPWGGKRAGFEAEGKIKLKDFNITTDLGPASQEVELIISVEGVQQK.

An N-terminal signal peptide occupies residues 1-22; that stretch reads MKKNLLGFTLASLLFTTGSAVA.

This sequence belongs to the UPF0312 family. Type 1 subfamily.

It is found in the periplasm. The protein is Protein YceI of Salmonella dublin (strain CT_02021853).